The chain runs to 30 residues: Cyclotide hypa-A (30 aa).

A cross-link (cyclopeptide (Gly-Asn)) is located at residues 1–30; the sequence is GIPCAESCVYIPCTITALLGCSCKNKVCYN. Disulfide bonds link C4–C21, C8–C23, and C13–C28.

This is a cyclic peptide.

Probably participates in a plant defense mechanism. The sequence is that of Cyclotide hypa-A from Pombalia parviflora (Violetilla).